We begin with the raw amino-acid sequence, 1187 residues long: DNA-directed RNA polymerase subunit beta (1187 aa).

This sequence belongs to the RNA polymerase beta chain family. The RNAP catalytic core consists of 2 alpha, 1 beta, 1 beta' and 1 omega subunit. When a sigma factor is associated with the core the holoenzyme is formed, which can initiate transcription.

It carries out the reaction RNA(n) + a ribonucleoside 5'-triphosphate = RNA(n+1) + diphosphate. Functionally, DNA-dependent RNA polymerase catalyzes the transcription of DNA into RNA using the four ribonucleoside triphosphates as substrates. The protein is DNA-directed RNA polymerase subunit beta of Streptococcus mutans serotype c (strain ATCC 700610 / UA159).